A 272-amino-acid chain; its full sequence is Undecaprenyl-diphosphatase (272 aa).

The next 7 helical transmembrane spans lie at 39 to 59, 87 to 107, 113 to 133, 145 to 165, 188 to 208, 220 to 240, and 251 to 271; these read SGLT…FVYF, WMIV…EQPI, SSPL…GLTD, ITLG…VPGV, FSFL…GLHL, PMLV…AFLL, and FVWY…VGLL.

The protein belongs to the UppP family.

The protein resides in the cell inner membrane. The enzyme catalyses di-trans,octa-cis-undecaprenyl diphosphate + H2O = di-trans,octa-cis-undecaprenyl phosphate + phosphate + H(+). Functionally, catalyzes the dephosphorylation of undecaprenyl diphosphate (UPP). Confers resistance to bacitracin. This chain is Undecaprenyl-diphosphatase, found in Trichlorobacter lovleyi (strain ATCC BAA-1151 / DSM 17278 / SZ) (Geobacter lovleyi).